The chain runs to 411 residues: Meiotically up-regulated gene 147 protein (411 aa).

Disordered stretches follow at residues Met1 to Lys52, Glu102 to Asp137, and His156 to Ser191. The segment covering Thr33–Glu43 has biased composition (polar residues). Over residues His156–Thr172 the composition is skewed to basic and acidic residues.

The protein localises to the cytoplasm. It localises to the nucleus. Functionally, has a role in meiosis. This Schizosaccharomyces pombe (strain 972 / ATCC 24843) (Fission yeast) protein is Meiotically up-regulated gene 147 protein (mug147).